We begin with the raw amino-acid sequence, 264 residues long: Glutamate 5-kinase (264 aa).

Position 9 (K9) interacts with ATP. The substrate site is built by S47, D132, and N144. ATP-binding positions include 164 to 165 (SD) and 206 to 212 (TGGIVTK).

This sequence belongs to the glutamate 5-kinase family.

The protein resides in the cytoplasm. It catalyses the reaction L-glutamate + ATP = L-glutamyl 5-phosphate + ADP. The protein operates within amino-acid biosynthesis; L-proline biosynthesis; L-glutamate 5-semialdehyde from L-glutamate: step 1/2. Functionally, catalyzes the transfer of a phosphate group to glutamate to form L-glutamate 5-phosphate. This is Glutamate 5-kinase from Helicobacter hepaticus (strain ATCC 51449 / 3B1).